The following is a 66-amino-acid chain: UPF0337 protein BA_0987/GBAA_0987/BAS0923 (66 aa).

Residues 1–22 (MSESGLKEQITGKVEKTKGQVK) are disordered. The segment covering 13–22 (KVEKTKGQVK) has biased composition (basic and acidic residues).

Belongs to the UPF0337 (CsbD) family.

This Bacillus anthracis protein is UPF0337 protein BA_0987/GBAA_0987/BAS0923.